The following is a 294-amino-acid chain: 33 kDa chaperonin (294 aa).

2 cysteine pairs are disulfide-bonded: cysteine 238/cysteine 240 and cysteine 271/cysteine 274.

Belongs to the HSP33 family. Post-translationally, under oxidizing conditions two disulfide bonds are formed involving the reactive cysteines. Under reducing conditions zinc is bound to the reactive cysteines and the protein is inactive.

It localises to the cytoplasm. Functionally, redox regulated molecular chaperone. Protects both thermally unfolding and oxidatively damaged proteins from irreversible aggregation. Plays an important role in the bacterial defense system toward oxidative stress. This Staphylococcus carnosus (strain TM300) protein is 33 kDa chaperonin.